An 876-amino-acid polypeptide reads, in one-letter code: Valine--tRNA ligase (876 aa).

The short motif at 44-54 is the 'HIGH' region element; the sequence is PNVTGKLHLGH. The 'KMSKS' region motif lies at 520-524; the sequence is KMSKS. K523 contacts ATP. Residues 805-876 adopt a coiled-coil conformation; that stretch reads LEGLIDMDKE…VKSRIEQLKA (72 aa).

The protein belongs to the class-I aminoacyl-tRNA synthetase family. ValS type 1 subfamily. Monomer.

Its subcellular location is the cytoplasm. The enzyme catalyses tRNA(Val) + L-valine + ATP = L-valyl-tRNA(Val) + AMP + diphosphate. Functionally, catalyzes the attachment of valine to tRNA(Val). As ValRS can inadvertently accommodate and process structurally similar amino acids such as threonine, to avoid such errors, it has a 'posttransfer' editing activity that hydrolyzes mischarged Thr-tRNA(Val) in a tRNA-dependent manner. In Staphylococcus epidermidis (strain ATCC 35984 / DSM 28319 / BCRC 17069 / CCUG 31568 / BM 3577 / RP62A), this protein is Valine--tRNA ligase.